Consider the following 381-residue polypeptide: DNA replication and repair protein RecF (381 aa).

ATP is bound at residue 30 to 37; sequence GENAQGKT.

The protein belongs to the RecF family.

The protein localises to the cytoplasm. The RecF protein is involved in DNA metabolism; it is required for DNA replication and normal SOS inducibility. RecF binds preferentially to single-stranded, linear DNA. It also seems to bind ATP. This Lactobacillus delbrueckii subsp. bulgaricus (strain ATCC 11842 / DSM 20081 / BCRC 10696 / JCM 1002 / NBRC 13953 / NCIMB 11778 / NCTC 12712 / WDCM 00102 / Lb 14) protein is DNA replication and repair protein RecF.